A 65-amino-acid polypeptide reads, in one-letter code: Small ribosomal subunit protein bS21 (65 aa).

The tract at residues 39-65 (EKPSIKRKKKAIAARKRALKKQRKMMD) is disordered. Residues 43–65 (IKRKKKAIAARKRALKKQRKMMD) show a composition bias toward basic residues.

This sequence belongs to the bacterial ribosomal protein bS21 family.

In Pelobacter propionicus (strain DSM 2379 / NBRC 103807 / OttBd1), this protein is Small ribosomal subunit protein bS21.